We begin with the raw amino-acid sequence, 188 residues long: Pyridoxal 5'-phosphate synthase subunit PdxT (188 aa).

Residue 47-49 (GES) participates in L-glutamine binding. Cys-79 serves as the catalytic Nucleophile. Residues Arg-105 and 134–135 (IR) contribute to the L-glutamine site. Residues His-170 and Glu-172 each act as charge relay system in the active site.

Belongs to the glutaminase PdxT/SNO family. As to quaternary structure, in the presence of PdxS, forms a dodecamer of heterodimers. Only shows activity in the heterodimer.

It catalyses the reaction aldehydo-D-ribose 5-phosphate + D-glyceraldehyde 3-phosphate + L-glutamine = pyridoxal 5'-phosphate + L-glutamate + phosphate + 3 H2O + H(+). It carries out the reaction L-glutamine + H2O = L-glutamate + NH4(+). It participates in cofactor biosynthesis; pyridoxal 5'-phosphate biosynthesis. Its function is as follows. Catalyzes the hydrolysis of glutamine to glutamate and ammonia as part of the biosynthesis of pyridoxal 5'-phosphate. The resulting ammonia molecule is channeled to the active site of PdxS. The sequence is that of Pyridoxal 5'-phosphate synthase subunit PdxT from Listeria monocytogenes serotype 4b (strain CLIP80459).